The sequence spans 281 residues: Phytanoyl-CoA dioxygenase domain-containing protein 1 homolog (281 aa).

Residues Lys-95, Met-134, His-149–Asp-151, and Trp-166 each bind 2-oxoglutarate. Residues His-149 and Asp-151 each coordinate Fe cation. A Fe cation-binding site is contributed by His-239. 2-oxoglutarate is bound by residues Ser-241 and Arg-250.

The protein belongs to the PhyH family. PHYHD1 subfamily. The cofactor is Fe cation.

Functionally, has alpha-ketoglutarate-dependent dioxygenase activity. Does not show detectable activity towards fatty acid CoA thioesters. Is not expected to be active with phytanoyl CoA. The polypeptide is Phytanoyl-CoA dioxygenase domain-containing protein 1 homolog (phyhd1) (Dictyostelium discoideum (Social amoeba)).